Here is a 204-residue protein sequence, read N- to C-terminus: Holliday junction branch migration complex subunit RuvA (204 aa).

Positions 1-64 are domain I; that stretch reads MIAQLKGSLA…EDAFLLYGFH (64 aa). The interval 65–143 is domain II; that stretch reads SESQRKVFNL…ALPMAAPTTA (79 aa). Positions 144–154 are flexible linker; the sequence is IGAATMAANPA. The tract at residues 154–204 is domain III; sequence AGLREEVASALLNLGYKPPQVDAALAKLFSAGEITDISVALKGALKLLAPA.

The protein belongs to the RuvA family. In terms of assembly, homotetramer. Forms an RuvA(8)-RuvB(12)-Holliday junction (HJ) complex. HJ DNA is sandwiched between 2 RuvA tetramers; dsDNA enters through RuvA and exits via RuvB. An RuvB hexamer assembles on each DNA strand where it exits the tetramer. Each RuvB hexamer is contacted by two RuvA subunits (via domain III) on 2 adjacent RuvB subunits; this complex drives branch migration. In the full resolvosome a probable DNA-RuvA(4)-RuvB(12)-RuvC(2) complex forms which resolves the HJ.

The protein resides in the cytoplasm. The RuvA-RuvB-RuvC complex processes Holliday junction (HJ) DNA during genetic recombination and DNA repair, while the RuvA-RuvB complex plays an important role in the rescue of blocked DNA replication forks via replication fork reversal (RFR). RuvA specifically binds to HJ cruciform DNA, conferring on it an open structure. The RuvB hexamer acts as an ATP-dependent pump, pulling dsDNA into and through the RuvAB complex. HJ branch migration allows RuvC to scan DNA until it finds its consensus sequence, where it cleaves and resolves the cruciform DNA. In Magnetococcus marinus (strain ATCC BAA-1437 / JCM 17883 / MC-1), this protein is Holliday junction branch migration complex subunit RuvA.